The chain runs to 446 residues: Keratin, type I cytoskeletal 25 (446 aa).

The head stretch occupies residues 1–74 (MSLRLSSGSR…VNEGGLLSGN (74 aa)). Residues 75-110 (EKVTMQNLNDRLASYLDNVQALQEANADLEQKIKGW) are coil 1A. The region spanning 75-390 (EKVTMQNLND…LLIGGDEGAC (316 aa)) is the IF rod domain. The interval 111 to 132 (YEKFGPGSCRGLDHDYSRYFPI) is linker 1. The coil 1B stretch occupies residues 133–224 (IDDLKNQIIT…KNHKEEMQAL (92 aa)). Residues 225–247 (QCAAGGNVNVEMNAAPGVDLTVL) are linker 12. Residues 248–386 (LNNMRAEYEA…ETYCLLIGGD (139 aa)) are coil 2. Residues 387 to 446 (EGACKSSSYKSKDYGSGNAGNQIKDPVKAIVVKKVLEEVDQRSKILTTRLHSLEEKSQSN) form a tail region. S438 carries the post-translational modification Phosphoserine.

This sequence belongs to the intermediate filament family. As to quaternary structure, heterodimer of a type I and a type II keratin. Heterodimer with type II keratin KRT5 leading to the formation of keratin intermediate filament (KIF) network. Interacts with KRT6A to form filaments.

The protein resides in the cytoplasm. Functionally, essential for the proper assembly of type I and type II keratin protein complexes and formation of keratin intermediate filaments in the inner root sheath (irs). Plays a role in the cytoskeleton organization. This chain is Keratin, type I cytoskeletal 25, found in Mus musculus (Mouse).